The primary structure comprises 310 residues: tRNA-cytidine(32) 2-sulfurtransferase (310 aa).

The PP-loop motif signature appears at 48-53 (SGGKDS). Positions 123, 126, and 214 each coordinate [4Fe-4S] cluster.

This sequence belongs to the TtcA family. Homodimer. Mg(2+) serves as cofactor. Requires [4Fe-4S] cluster as cofactor.

The protein localises to the cytoplasm. It catalyses the reaction cytidine(32) in tRNA + S-sulfanyl-L-cysteinyl-[cysteine desulfurase] + AH2 + ATP = 2-thiocytidine(32) in tRNA + L-cysteinyl-[cysteine desulfurase] + A + AMP + diphosphate + H(+). It participates in tRNA modification. Functionally, catalyzes the ATP-dependent 2-thiolation of cytidine in position 32 of tRNA, to form 2-thiocytidine (s(2)C32). The sulfur atoms are provided by the cysteine/cysteine desulfurase (IscS) system. The sequence is that of tRNA-cytidine(32) 2-sulfurtransferase from Vibrio vulnificus (strain YJ016).